The following is a 101-amino-acid chain: uncharacterized protein (101 aa).

The N-terminal stretch at 1–17 is a signal peptide; that stretch reads MKKAAVLAVVLSLGLAG. C18 carries the N-palmitoyl cysteine lipid modification. C18 carries S-diacylglycerol cysteine lipidation.

It localises to the cell membrane. This is an uncharacterized protein from Pasteurella multocida (strain Pm70).